Consider the following 214-residue polypeptide: ER lumen protein-retaining receptor (214 aa).

At 1 to 4 (MVFN) the chain is on the lumenal side. Residues 5-23 (LFRISADLVHLLSIYFLLT) form a helical membrane-spanning segment. The Cytoplasmic portion of the chain corresponds to 24 to 37 (KIISHKNCIGISLR). The chain crosses the membrane as a helical span at residues 38-55 (SQILFFIVWVTRYLDIFY). The Lumenal segment spans residues 56-63 (NFYSLYNT). A helical membrane pass occupies residues 64-82 (ILKIVYLTTSAYTIYLISK). Residues 83-98 (RFRATYDKIHDTLNVW) are Cytoplasmic-facing. Residues 99–112 (YLIVPCIVLAFIFT) traverse the membrane as a helical segment. At 113–119 (EDYSITE) the chain is on the lumenal side. A helical membrane pass occupies residues 120-139 (ICWTFSIFLEAVAILPQILL). Residues 140–151 (LRSTGEVENLNS) lie on the Cytoplasmic side of the membrane. Residues 152 to 170 (QYIFCLGLYRALYIINWIY) traverse the membrane as a helical segment. Over 171-181 (RYATEQSYWSP) the chain is Lumenal. A helical membrane pass occupies residues 182–202 (LTWICGSIQTLLYVEYFYYYI). Over 203-214 (KSRVEGTKFVLP) the chain is Cytoplasmic.

It belongs to the ERD2 family.

It localises to the endoplasmic reticulum membrane. Its function is as follows. Required for the retention of luminal endoplasmic reticulum proteins. Determines the specificity of the luminal ER protein retention system. Also required for normal vesicular traffic through the Golgi. This is ER lumen protein-retaining receptor from Entamoeba histolytica (strain ATCC 30459 / HM-1:IMSS / ABRM).